Consider the following 516-residue polypeptide: 2,3-bisphosphoglycerate-independent phosphoglycerate mutase (516 aa).

2 residues coordinate Mn(2+): Asp14 and Ser64. Residue Ser64 is the Phosphoserine intermediate of the active site. Substrate contacts are provided by residues His125, 155-156, Arg187, Arg193, 263-266, and Lys337; these read RD and RPDR. The Mn(2+) site is built by Asp404, His408, Asp445, His446, and His464.

Belongs to the BPG-independent phosphoglycerate mutase family. In terms of assembly, monomer. The cofactor is Mn(2+).

The catalysed reaction is (2R)-2-phosphoglycerate = (2R)-3-phosphoglycerate. It participates in carbohydrate degradation; glycolysis; pyruvate from D-glyceraldehyde 3-phosphate: step 3/5. Catalyzes the interconversion of 2-phosphoglycerate and 3-phosphoglycerate. This chain is 2,3-bisphosphoglycerate-independent phosphoglycerate mutase, found in Saccharophagus degradans (strain 2-40 / ATCC 43961 / DSM 17024).